The following is an 82-amino-acid chain: Small ribosomal subunit protein bS16 (82 aa).

This sequence belongs to the bacterial ribosomal protein bS16 family.

This Clostridium botulinum (strain ATCC 19397 / Type A) protein is Small ribosomal subunit protein bS16.